Consider the following 202-residue polypeptide: Na(+)-translocating NADH-quinone reductase subunit E (202 aa).

The next 6 membrane-spanning stretches (helical) occupy residues 11–31 (SVFI…FLAV), 35–55 (VTTA…SVPA), 79–99 (LSFL…QILE), 114–134 (GIFL…AFMV), 144–164 (LVFG…LAAV), and 180–200 (LGIT…FSGV).

The protein belongs to the NqrDE/RnfAE family. Composed of six subunits; NqrA, NqrB, NqrC, NqrD, NqrE and NqrF.

Its subcellular location is the cell inner membrane. The catalysed reaction is a ubiquinone + n Na(+)(in) + NADH + H(+) = a ubiquinol + n Na(+)(out) + NAD(+). NQR complex catalyzes the reduction of ubiquinone-1 to ubiquinol by two successive reactions, coupled with the transport of Na(+) ions from the cytoplasm to the periplasm. NqrA to NqrE are probably involved in the second step, the conversion of ubisemiquinone to ubiquinol. The protein is Na(+)-translocating NADH-quinone reductase subunit E of Shewanella denitrificans (strain OS217 / ATCC BAA-1090 / DSM 15013).